A 625-amino-acid polypeptide reads, in one-letter code: Vitamin B12 transporter BtuB (625 aa).

The first 21 residues, methionine 1 to alanine 21, serve as a signal peptide directing secretion. The TonB box signature appears at aspartate 31–asparagine 38. In terms of domain architecture, TBDR plug spans proline 43–glycine 157. Cyanocob(III)alamin contacts are provided by residues serine 90, asparagine 97, and isoleucine 115–threonine 116. Residues lysine 160–phenylalanine 625 form the TBDR beta-barrel domain. 3 beta stranded membrane-spanning segments follow: residues threonine 163–glycine 170, tyrosine 174–glutamine 183, and threonine 189–serine 200. Residues aspartate 204, glutamine 217, aspartate 219, and aspartate 221 each contribute to the Ca(2+) site. A run of 2 beta stranded transmembrane segments spans residues phenylalanine 223–glutamate 233 and glutamate 238–aspartate 254. The Ca(2+) site is built by tyrosine 255, aspartate 256, and aspartate 269. 14 consecutive transmembrane segments (beta stranded) span residues arginine 271–lysine 285, glycine 287–asparagine 304, serine 317–glutamine 333, asparagine 336–tryptophan 345, phenylalanine 363–serine 379, valine 381–aspartate 391, phenylalanine 395–isoleucine 410, tyrosine 413–asparagine 427, glutamate 445–glutamate 454, leucine 460–asparagine 469, tyrosine 484–phenylalanine 501, proline 505–alanine 520, arginine 528–tryptophan 540, and aspartate 546–aspartate 561. Residue serine 317 coordinates cyanocob(III)alamin. Residue arginine 528 coordinates cyanocob(III)alamin. Tyrosine 562 is a binding site for cyanocob(III)alamin. 3 beta stranded membrane-spanning segments follow: residues threonine 569 to serine 583, isoleucine 596 to valine 607, and proline 613 to phenylalanine 625. A TonB C-terminal box motif is present at residues tyrosine 608 to phenylalanine 625.

This sequence belongs to the TonB-dependent receptor family. BtuB (TC 1.B.14.3.1) subfamily.

It localises to the cell outer membrane. Functionally, involved in the active translocation of vitamin B12 (cyanocobalamin) across the outer membrane to the periplasmic space. It derives its energy for transport by interacting with the trans-periplasmic membrane protein TonB. This chain is Vitamin B12 transporter BtuB, found in Yersinia pestis bv. Antiqua (strain Antiqua).